We begin with the raw amino-acid sequence, 86 residues long: uncharacterized protein (86 aa).

Helical transmembrane passes span isoleucine 20 to leucine 38 and phenylalanine 47 to valine 63. The segment at leucine 67–glutamate 86 is disordered. Basic and acidic residues predominate over residues glutamine 69 to glutamate 86.

The protein localises to the cell membrane. This is an uncharacterized protein from Haemophilus influenzae (strain ATCC 51907 / DSM 11121 / KW20 / Rd).